An 860-amino-acid chain; its full sequence is Leucine--tRNA ligase (860 aa).

The 'HIGH' region motif lies at V73 to G83. The short motif at S650 to M654 is the 'KMSKS' region element. Position 653 (D653) interacts with ATP.

The protein belongs to the class-I aminoacyl-tRNA synthetase family.

It localises to the cytoplasm. It carries out the reaction tRNA(Leu) + L-leucine + ATP = L-leucyl-tRNA(Leu) + AMP + diphosphate. This is Leucine--tRNA ligase from Shigella flexneri.